The sequence spans 341 residues: Protein P3 (341 aa).

The tract at residues 46 to 175 (RARQAANPVS…QTKNAPDANE (130 aa)) is disordered. A compositionally biased stretch (basic residues) spans 97–116 (KSKRAVRREKRRTAAKKATN). The span at 142 to 152 (SYLSSLLSSPS) shows a compositional bias: low complexity.

The protein belongs to the nepovirus protein P3 family.

The protein is Protein P3 of Vitis rupestris (Grape).